The following is a 137-amino-acid chain: Small ribosomal subunit protein uS11 (137 aa).

The tract at residues 116-137 (EDVTPIPHDGTRPKGGRRGRRV) is disordered.

The protein belongs to the universal ribosomal protein uS11 family. Part of the 30S ribosomal subunit.

Its function is as follows. Located on the platform of the 30S subunit. This Pyrococcus furiosus (strain ATCC 43587 / DSM 3638 / JCM 8422 / Vc1) protein is Small ribosomal subunit protein uS11.